A 349-amino-acid polypeptide reads, in one-letter code: Succinylglutamate desuccinylase (349 aa).

Positions 70, 73, and 166 each coordinate Zn(2+). The active site involves glutamate 229.

It belongs to the AspA/AstE family. Succinylglutamate desuccinylase subfamily. The cofactor is Zn(2+).

The catalysed reaction is N-succinyl-L-glutamate + H2O = L-glutamate + succinate. Its pathway is amino-acid degradation; L-arginine degradation via AST pathway; L-glutamate and succinate from L-arginine: step 5/5. In terms of biological role, transforms N(2)-succinylglutamate into succinate and glutamate. The polypeptide is Succinylglutamate desuccinylase (Burkholderia pseudomallei (strain 1710b)).